We begin with the raw amino-acid sequence, 138 residues long: 10 kDa chaperonin 1, chloroplastic (138 aa).

The transit peptide at 1 to 61 directs the protein to the chloroplast; that stretch reads MASSFITVPK…VPQADRVLVR (61 aa). The interval 50-137 is cpn-10 domain; the sequence is KVVPQADRVL…CKESDLLAIV (88 aa).

This sequence belongs to the GroES chaperonin family. Expressed at low levels in germinating seeds, seedlings, rosettes leaves, flowers and siliques.

It is found in the plastid. Its subcellular location is the chloroplast. Its function is as follows. Functions as a co-chaperone for protein folding in chloroplasts. This is 10 kDa chaperonin 1, chloroplastic from Arabidopsis thaliana (Mouse-ear cress).